The following is a 323-amino-acid chain: MAAPKGSLWVRTQLGLPPLLLLTMALAGGSGTASAEAFDSVLGDTASCHRACQLTYPLHTYPKEEELYACQRGCRLFSICQFVDDGIDLNRTKLECESACTEAYSQSDEQYACHLGCQNQLPFAELRQEQLMSLMPKMHLLFPLTLVRSFWSDMMDSAQSFITSSWTFYLQADDGKIVIFQSKPEIQYAPHLEQEPTNLRESSLSKMSYLQMRNSQAHRNFLEDGESDGFLRCLSLNSGWILTTTLVLSVMVLLWICCATVATAVEQYVPSEKLSIYGDLEFMNEQKLNRYPASSLVVVRSKTEDHEEAGPLPTKVNLAHSEI.

An N-terminal signal peptide occupies residues 1–35 (MAAPKGSLWVRTQLGLPPLLLLTMALAGGSGTASA). At 36–238 (EAFDSVLGDT…GFLRCLSLNS (203 aa)) the chain is on the extracellular side. Asn-90 carries an N-linked (GlcNAc...) asparagine glycan. Residues 239–259 (GWILTTTLVLSVMVLLWICCA) form a helical membrane-spanning segment. Over 260 to 323 (TVATAVEQYV…TKVNLAHSEI (64 aa)) the chain is Cytoplasmic. An ATG16L1-binding motif motif is present at residues 263–281 (TAVEQYVPSEKLSIYGDLE). The residue at position 303 (Thr-303) is a Phosphothreonine.

It belongs to the TMEM59 family. As to quaternary structure, interacts with ATG16L1 (via WD repeats). Post-translationally, N-glycosylated.

It localises to the late endosome membrane. The protein localises to the lysosome membrane. The protein resides in the cell membrane. Its subcellular location is the golgi apparatus membrane. Its function is as follows. Acts as a regulator of autophagy in response to S.aureus infection by promoting activation of LC3 (MAP1LC3A, MAP1LC3B or MAP1LC3C). Acts by interacting with ATG16L1, leading to promote a functional complex between LC3 and ATG16L1 and promoting LC3 lipidation and subsequent activation of autophagy. Modulates the O-glycosylation and complex N-glycosylation steps occurring during the Golgi maturation of several proteins such as APP, BACE1, SEAP or PRNP. Inhibits APP transport to the cell surface and further shedding. The polypeptide is Transmembrane protein 59 (TMEM59) (Homo sapiens (Human)).